Here is a 215-residue protein sequence, read N- to C-terminus: Thiamine-phosphate synthase (215 aa).

4-amino-2-methyl-5-(diphosphooxymethyl)pyrimidine-binding positions include 40 to 44 and asparagine 72; that span reads QLRIK. 2 residues coordinate Mg(2+): aspartate 73 and aspartate 92. A 4-amino-2-methyl-5-(diphosphooxymethyl)pyrimidine-binding site is contributed by serine 111. 137–139 is a binding site for 2-[(2R,5Z)-2-carboxy-4-methylthiazol-5(2H)-ylidene]ethyl phosphate; the sequence is TTT. Lysine 140 is a 4-amino-2-methyl-5-(diphosphooxymethyl)pyrimidine binding site. Residues glycine 169 and 189–190 each bind 2-[(2R,5Z)-2-carboxy-4-methylthiazol-5(2H)-ylidene]ethyl phosphate; that span reads VS.

Belongs to the thiamine-phosphate synthase family. Requires Mg(2+) as cofactor.

The enzyme catalyses 2-[(2R,5Z)-2-carboxy-4-methylthiazol-5(2H)-ylidene]ethyl phosphate + 4-amino-2-methyl-5-(diphosphooxymethyl)pyrimidine + 2 H(+) = thiamine phosphate + CO2 + diphosphate. It catalyses the reaction 2-(2-carboxy-4-methylthiazol-5-yl)ethyl phosphate + 4-amino-2-methyl-5-(diphosphooxymethyl)pyrimidine + 2 H(+) = thiamine phosphate + CO2 + diphosphate. The catalysed reaction is 4-methyl-5-(2-phosphooxyethyl)-thiazole + 4-amino-2-methyl-5-(diphosphooxymethyl)pyrimidine + H(+) = thiamine phosphate + diphosphate. It functions in the pathway cofactor biosynthesis; thiamine diphosphate biosynthesis; thiamine phosphate from 4-amino-2-methyl-5-diphosphomethylpyrimidine and 4-methyl-5-(2-phosphoethyl)-thiazole: step 1/1. In terms of biological role, condenses 4-methyl-5-(beta-hydroxyethyl)thiazole monophosphate (THZ-P) and 2-methyl-4-amino-5-hydroxymethyl pyrimidine pyrophosphate (HMP-PP) to form thiamine monophosphate (TMP). This Proteus mirabilis (strain HI4320) protein is Thiamine-phosphate synthase.